A 198-amino-acid chain; its full sequence is DnaJ homolog subfamily C member 12 (198 aa).

An N-acetylmethionine modification is found at Met-1. A J domain is found at Asp-14–Arg-79. A disordered region spans residues Glu-114–Leu-177. Residues Ser-116–Pro-125 show a composition bias toward polar residues. The segment covering Asn-126–Glu-156 has biased composition (basic and acidic residues). Ser-160, Ser-166, and Ser-182 each carry phosphoserine.

Interacts with HSPA8. Interacts with TPH1. Interacts with TPH2. As to expression, highest levels of expression are detected in kidney, pineal gland, and raphe nuclei in the brain where it localizes to serotonerigic neurons.

The protein resides in the cytoplasm. In terms of biological role, probable co-chaperone that participates in the proper folding of biopterin-dependent aromatic amino acid hydroxylases, which include phenylalanine-4-hydroxylase (PAH), tyrosine 3-monooxygenase (TH) and peripheral and neuronal tryptophan hydroxylases (TPH1 and TPH2). This is DnaJ homolog subfamily C member 12 (Dnajc12) from Mus musculus (Mouse).